The sequence spans 74 residues: MSKQDLIEMEGTVTESLPNAMFRVDLDNGFNVLAHISGKIRRNYIKILPGDRVKVELTPYDLTKGRITYRLRKK.

The 72-residue stretch at 1–72 (MSKQDLIEME…TKGRITYRLR (72 aa)) folds into the S1-like domain.

It belongs to the IF-1 family. In terms of assembly, component of the 30S ribosomal translation pre-initiation complex which assembles on the 30S ribosome in the order IF-2 and IF-3, IF-1 and N-formylmethionyl-tRNA(fMet); mRNA recruitment can occur at any time during PIC assembly.

It is found in the cytoplasm. In terms of biological role, one of the essential components for the initiation of protein synthesis. Stabilizes the binding of IF-2 and IF-3 on the 30S subunit to which N-formylmethionyl-tRNA(fMet) subsequently binds. Helps modulate mRNA selection, yielding the 30S pre-initiation complex (PIC). Upon addition of the 50S ribosomal subunit IF-1, IF-2 and IF-3 are released leaving the mature 70S translation initiation complex. The sequence is that of Translation initiation factor IF-1 from Trichodesmium erythraeum (strain IMS101).